A 463-amino-acid chain; its full sequence is L-seryl-tRNA(Sec) selenium transferase (463 aa).

Lys295 is subject to N6-(pyridoxal phosphate)lysine.

The protein belongs to the SelA family. As to quaternary structure, homodecamer; pentamer of dimers. Binds only one seryl-tRNA(Sec) per dimer. Pyridoxal 5'-phosphate is required as a cofactor.

The protein resides in the cytoplasm. The enzyme catalyses L-seryl-tRNA(Sec) + selenophosphate + H(+) = L-selenocysteinyl-tRNA(Sec) + phosphate. It functions in the pathway aminoacyl-tRNA biosynthesis; selenocysteinyl-tRNA(Sec) biosynthesis; selenocysteinyl-tRNA(Sec) from L-seryl-tRNA(Sec) (bacterial route): step 1/1. In terms of biological role, converts seryl-tRNA(Sec) to selenocysteinyl-tRNA(Sec) required for selenoprotein biosynthesis. The sequence is that of L-seryl-tRNA(Sec) selenium transferase from Edwardsiella ictaluri (strain 93-146).